A 393-amino-acid polypeptide reads, in one-letter code: Tryptophan synthase beta chain (393 aa).

Lysine 86 bears the N6-(pyridoxal phosphate)lysine mark.

This sequence belongs to the TrpB family. As to quaternary structure, tetramer of two alpha and two beta chains. The cofactor is pyridoxal 5'-phosphate.

It catalyses the reaction (1S,2R)-1-C-(indol-3-yl)glycerol 3-phosphate + L-serine = D-glyceraldehyde 3-phosphate + L-tryptophan + H2O. It functions in the pathway amino-acid biosynthesis; L-tryptophan biosynthesis; L-tryptophan from chorismate: step 5/5. In terms of biological role, the beta subunit is responsible for the synthesis of L-tryptophan from indole and L-serine. The protein is Tryptophan synthase beta chain of Alteromonas mediterranea (strain DSM 17117 / CIP 110805 / LMG 28347 / Deep ecotype).